The primary structure comprises 207 residues: Interleukin-6 (207 aa).

The N-terminal stretch at 1 to 18 is a signal peptide; the sequence is MKFFSIASLGLLLVVATA. Residues 26–47 are disordered; it reads REDGENSVTRNKPTRASSGKTR. Over residues 31–44 the composition is skewed to polar residues; that stretch reads NSVTRNKPTRASSG. Residues cysteine 65 and cysteine 71 are joined by a disulfide bond. Serine 74 bears the Phosphoserine mark. A disulfide bridge connects residues cysteine 94 and cysteine 104.

The protein belongs to the IL-6 superfamily. In terms of assembly, component of a hexamer of two molecules each of IL6, IL6R and IL6ST; first binds to IL6R to associate with the signaling subunit IL6ST. Interacts with IL6R (via the N-terminal ectodomain); this interaction may be affected by IL6R-binding with SORL1, hence decreasing IL6 cis signaling. Interacts with SORL1 (via the N-terminal ectodomain); this interaction leads to IL6 internalization and lysosomal degradation. May form a trimeric complex with the soluble SORL1 ectodomain and soluble IL6R receptor; this interaction might stabilize circulating IL6, hence promoting IL6 trans signaling.

The protein resides in the secreted. In terms of biological role, cytokine with a wide variety of biological functions in immunity, tissue regeneration, and metabolism. Binds to IL6R, then the complex associates to the signaling subunit IL6ST/gp130 to trigger the intracellular IL6-signaling pathway. The interaction with the membrane-bound IL6R and IL6ST stimulates 'classic signaling', whereas the binding of IL6 and soluble IL6R to IL6ST stimulates 'trans-signaling'. Alternatively, 'cluster signaling' occurs when membrane-bound IL6:IL6R complexes on transmitter cells activate IL6ST receptors on neighboring receiver cells. Functionally, IL6 is a potent inducer of the acute phase response. Rapid production of IL6 contributes to host defense during infection and tissue injury, but excessive IL6 synthesis is involved in disease pathology. In the innate immune response, is synthesized by myeloid cells, such as macrophages and dendritic cells, upon recognition of pathogens through toll-like receptors (TLRs) at the site of infection or tissue injury. In the adaptive immune response, is required for the differentiation of B cells into immunoglobulin-secreting cells. Plays a major role in the differentiation of CD4(+) T cell subsets. Essential factor for the development of T follicular helper (Tfh) cells that are required for the induction of germinal-center formation. Required to drive naive CD4(+) T cells to the Th17 lineage. Also required for proliferation of myeloma cells and the survival of plasmablast cells. Acts as an essential factor in bone homeostasis and on vessels directly or indirectly by induction of VEGF, resulting in increased angiogenesis activity and vascular permeability. Induces, through 'trans-signaling' and synergistically with IL1B and TNF, the production of VEGF. Involved in metabolic controls, is discharged into the bloodstream after muscle contraction increasing lipolysis and improving insulin resistance. 'Trans-signaling' in central nervous system also regulates energy and glucose homeostasis. Mediates, through GLP-1, crosstalk between insulin-sensitive tissues, intestinal L cells and pancreatic islets to adapt to changes in insulin demand. Also acts as a myokine. Plays a protective role during liver injury, being required for maintenance of tissue regeneration. Also has a pivotal role in iron metabolism by regulating HAMP/hepcidin expression upon inflammation or bacterial infection. Through activation of IL6ST-YAP-NOTCH pathway, induces inflammation-induced epithelial regeneration. The protein is Interleukin-6 (IL6) of Marmota monax (Woodchuck).